Reading from the N-terminus, the 387-residue chain is Postreplication repair E3 ubiquitin-protein ligase rad18 (387 aa).

The RING-type zinc finger occupies 29–67 (CLICHEYFRAPLITSCSHTFCSFCIRDYLREHPMCPACR). Positions 119 to 153 (DSASGDEEWEDDLASNSSPASIAKKTSRDSKKRKR) are disordered. Residues 122–131 (SGDEEWEDDL) are compositionally biased toward acidic residues. Residues 156 to 183 (LVHCPACSNLVPHNQINQHLDSCLNSPS) form a UBZ4-type zinc finger. Cys-159, Cys-162, His-174, and Cys-178 together coordinate Zn(2+). A disordered region spans residues 174 to 206 (HLDSCLNSPSSPSSSSSPYKNKDNSKSNSLLSF). A compositionally biased stretch (low complexity) spans 177-192 (SCLNSPSSPSSSSSPY). The SAP domain occupies 240-274 (YALLSESKIRSKLSEMGLPTDGHKQLLQRRHAKWV). Residues 335–387 (KQSTTNKNDSLRNTAVESSTEPSTSNGFPATSVSPPLTIDLTNSQTGSDGPQS) form a disordered region.

The protein belongs to the RAD18 family. Interacts with E2 ubc2, forming a complex with ubiquitin ligase activity.

It localises to the nucleus. The catalysed reaction is S-ubiquitinyl-[E2 ubiquitin-conjugating enzyme]-L-cysteine + [acceptor protein]-L-lysine = [E2 ubiquitin-conjugating enzyme]-L-cysteine + N(6)-ubiquitinyl-[acceptor protein]-L-lysine.. It functions in the pathway protein modification; protein ubiquitination. In terms of biological role, E3 RING-finger protein, member of the UBC2/RAD6 epistasis group. Associates to the E2 ubiquitin conjugating enzyme ubc2/rad6 to form the ubc2-rad18 ubiquitin ligase complex involved in postreplicative repair (PRR) of damaged DNA. This Schizosaccharomyces pombe (strain 972 / ATCC 24843) (Fission yeast) protein is Postreplication repair E3 ubiquitin-protein ligase rad18 (rhp18).